We begin with the raw amino-acid sequence, 194 residues long: RNA polymerase II subunit A C-terminal domain phosphatase SSU72 like protein 3 (194 aa).

This sequence belongs to the SSU72 phosphatase family.

The protein localises to the nucleus. The catalysed reaction is O-phospho-L-seryl-[protein] + H2O = L-seryl-[protein] + phosphate. It carries out the reaction O-phospho-L-threonyl-[protein] + H2O = L-threonyl-[protein] + phosphate. In terms of biological role, protein phosphatase that catalyzes the dephosphorylation of the C-terminal domain of RNA polymerase II. Plays a role in RNA processing and termination. The protein is RNA polymerase II subunit A C-terminal domain phosphatase SSU72 like protein 3 of Homo sapiens (Human).